Here is a 964-residue protein sequence, read N- to C-terminus: MAKVRVYELAKELGLSSKQLLGKLNDMGEFVRSASSTIEAPVVRRLRDQIGSAEPADDAKAAKPAARKSQTSSKKTSKETTTAKPAPGPKPGPGPKPTPGPRPGSSSGPKPGRSSAARTSATPRPGLIKSSGASSQQEPPAAKPESKPTPKPGQNVPKPHAPAPKPKPGAPSKSPKPGARPGPRPGGSAGLPSAARPGPRPGAGRRTGAPRPGNNPFASSQGMGQSRHRSEGGQRSGGSRSGQGERMPRPGGSQGSRGGSGMPRPNPAMMPKHQSSQIGQATTGRGGRGGGRGRGGSRGSGFGGGFGGGPRGPIGGGRGGRGGRGTQGAFGRGGGGRRGRKSRKQRRQEFDEMQAPLVGGVRVRKGNGETVRLRRGASLTDLAEKINAEPAQLVQVLFNLGEMVTATQSVSDDTLEILGGELNYQIQVVSPEDEDRELLESFDLEFGEDEGDDSDLVARPPVVTVMGHVDHGKTKLLDALRHTDVVKGEAGGITQAIGAYQVQTEVDDAERAITFIDTPGHEAFTAMRARGAQSTDIAVLVVAADDGVMPQTVEALNHAKAADVPIVVAVNKIDKPEADPDKVRGQLTEYGLVPEEYGGDTMFVNVSARTHEGLDDLLEAIVLTADAALDLRANPDMAAQGVAIEAHLDKGRGPVATALIQRGTLHIGDSIVAGSSYGRVRAMINDQGESVDEAAPATPVQVLGLTSVPGAGDNFLVVDDDRKARQIAEKREARMRAAQQARSSRRKTLDQLFEQLEKGETEELLLILKGDGAGSVEALEDALAKIDVGDEVDLRVIDRGVGAITETNVSLAAASNAVIVGFNVRPTAHAQRMADEENVDIRYYSVIYDAIDEIEAALRGMLKPIYEEKAMGTAEIRQIFRSSKVGTIAGCMITDGTIRRHAKARLVRDGVVVQETEINTLQREKDAVTEVREGYECGLTLTNYSDIHVGDEVQCYEMVEKPRD.

The tract at residues 49 to 357 (QIGSAEPADD…QEFDEMQAPL (309 aa)) is disordered. Residues 62-85 (AKPAARKSQTSSKKTSKETTTAKP) are compositionally biased toward low complexity. Pro residues predominate over residues 86-102 (APGPKPGPGPKPTPGPR). Residues 103-117 (PGSSSGPKPGRSSAA) are compositionally biased toward low complexity. Residues 159–169 (PHAPAPKPKPG) are compositionally biased toward pro residues. Composition is skewed to low complexity over residues 190 to 212 (GLPS…APRP) and 242 to 251 (GQGERMPRPG). Composition is skewed to gly residues over residues 252 to 261 (GSQGSRGGSG) and 284 to 334 (GRGG…GRGG). The span at 335-346 (GGRRGRKSRKQR) shows a compositional bias: basic residues. One can recognise a tr-type G domain in the interval 458 to 629 (ARPPVVTVMG…AIVLTADAAL (172 aa)). Residues 467-474 (GHVDHGKT) form a G1 region. Position 467–474 (467–474 (GHVDHGKT)) interacts with GTP. The G2 stretch occupies residues 492–496 (GITQA). The G3 stretch occupies residues 517-520 (DTPG). GTP-binding positions include 517-521 (DTPGH) and 571-574 (NKID). The tract at residues 571 to 574 (NKID) is G4. Residues 607 to 609 (SAR) form a G5 region.

It belongs to the TRAFAC class translation factor GTPase superfamily. Classic translation factor GTPase family. IF-2 subfamily.

The protein resides in the cytoplasm. Functionally, one of the essential components for the initiation of protein synthesis. Protects formylmethionyl-tRNA from spontaneous hydrolysis and promotes its binding to the 30S ribosomal subunits. Also involved in the hydrolysis of GTP during the formation of the 70S ribosomal complex. This chain is Translation initiation factor IF-2, found in Cutibacterium acnes (strain DSM 16379 / KPA171202) (Propionibacterium acnes).